We begin with the raw amino-acid sequence, 643 residues long: Phosphomethylpyrimidine synthase (643 aa).

Substrate contacts are provided by residues asparagine 248, methionine 277, tyrosine 306, histidine 342, 362–364 (SRG), 403–406 (DGLR), and glutamate 442. Histidine 446 is a binding site for Zn(2+). Tyrosine 469 is a substrate binding site. Position 510 (histidine 510) interacts with Zn(2+). Residues cysteine 590, cysteine 593, and cysteine 598 each contribute to the [4Fe-4S] cluster site.

This sequence belongs to the ThiC family. As to quaternary structure, homodimer. It depends on [4Fe-4S] cluster as a cofactor.

It catalyses the reaction 5-amino-1-(5-phospho-beta-D-ribosyl)imidazole + S-adenosyl-L-methionine = 4-amino-2-methyl-5-(phosphooxymethyl)pyrimidine + CO + 5'-deoxyadenosine + formate + L-methionine + 3 H(+). Its pathway is cofactor biosynthesis; thiamine diphosphate biosynthesis. Its function is as follows. Catalyzes the synthesis of the hydroxymethylpyrimidine phosphate (HMP-P) moiety of thiamine from aminoimidazole ribotide (AIR) in a radical S-adenosyl-L-methionine (SAM)-dependent reaction. The polypeptide is Phosphomethylpyrimidine synthase (Burkholderia cenocepacia (strain HI2424)).